We begin with the raw amino-acid sequence, 600 residues long: tRNA(Ile)-lysidine synthase, chloroplastic (600 aa).

35–40 (SGGQDS) contacts ATP.

Belongs to the tRNA(Ile)-lysidine synthase family.

Its subcellular location is the plastid. It localises to the chloroplast. The catalysed reaction is cytidine(34) in tRNA(Ile2) + L-lysine + ATP = lysidine(34) in tRNA(Ile2) + AMP + diphosphate + H(+). Functionally, ligates lysine onto the cytidine present at position 34 of the AUA codon-specific tRNA(Ile) that contains the anticodon CAU, in an ATP-dependent manner. Cytidine is converted to lysidine, thus changing the amino acid specificity of the tRNA from methionine to isoleucine. In Tupiella akineta (Green alga), this protein is tRNA(Ile)-lysidine synthase, chloroplastic.